A 33-amino-acid polypeptide reads, in one-letter code: Photosystem II reaction center protein Psb30 (33 aa).

The chain crosses the membrane as a helical span at residues 5 to 25 (LIVQLGSLALITVAGPAIIVL).

The protein belongs to the Psb30/Ycf12 family. As to quaternary structure, PSII is composed of 1 copy each of membrane proteins PsbA, PsbB, PsbC, PsbD, PsbE, PsbF, PsbH, PsbI, PsbJ, PsbK, PsbL, PsbM, PsbT, PsbY, PsbZ, Psb30/Ycf12, peripheral proteins of the oxygen-evolving complex and a large number of cofactors. It forms dimeric complexes.

The protein resides in the plastid. It localises to the chloroplast thylakoid membrane. A core subunit of photosystem II (PSII), probably helps stabilize the reaction center. The polypeptide is Photosystem II reaction center protein Psb30 (Euglena stellata).